The primary structure comprises 654 residues: Cytochrome B pre-mRNA-processing protein 1 (654 aa).

It is found in the mitochondrion. In terms of biological role, responsible for conferring a stable 5'-end on cytochrome b mRNA. The chain is Cytochrome B pre-mRNA-processing protein 1 (CBP1) from Saccharomyces cerevisiae (strain ATCC 204508 / S288c) (Baker's yeast).